Reading from the N-terminus, the 317-residue chain is Glucokinase (317 aa).

6-12 serves as a coordination point for ATP; sequence GVDIGGT.

Belongs to the ROK (NagC/XylR) family. In terms of assembly, homooligomer (possibly a homotetramer). Alternatively, it may form a heterotetramer of two glucokinase subunits with two ORF2 (AC P40182) proteins.

It is found in the cytoplasm. It carries out the reaction D-glucose + ATP = D-glucose 6-phosphate + ADP + H(+). A probable glucose kinase. Required for glucose repression of many different genes, restores glucose kinase activity in E.coli glk mutants. The chain is Glucokinase (glkA) from Streptomyces coelicolor (strain ATCC BAA-471 / A3(2) / M145).